The chain runs to 139 residues: MSISSALAMVFMGAKGNTAAQMSQALCFSKIGGEDGDIHRGFQSLLVAINRTDTEYVLRTANGLFGEKSYDFLTGFTDSCGKFYQATIKQLDFVNDTEKSTTRVNSWVADKTKGENILLFYFDNILNSFIVSSLQNCQI.

The N-terminal stretch at 1–20 (MSISSALAMVFMGAKGNTAA) is a signal peptide. Asn50 carries an N-linked (GlcNAc...) asparagine glycan.

Belongs to the serpin family. As to expression, highly expressed in dendritic cells and primary leukemia cells, especially those of myeloid lineage.

The protein resides in the secreted. Functionally, putative serine protease inhibitor. The protein is Serpin-like protein HMSD (HMSD) of Homo sapiens (Human).